Here is a 433-residue protein sequence, read N- to C-terminus: 23S rRNA (uracil(1939)-C(5))-methyltransferase RlmD (433 aa).

Residues 1–53 (MPVAVIESLDHEGRGVAHVDGKVVFVEGALAGEQVEYTVYRQRPSYDLAEATR) form the TRAM domain. [4Fe-4S] cluster contacts are provided by C66, C72, C75, and C154. The S-adenosyl-L-methionine site is built by Q263, F292, N297, E313, N341, and D362. The active-site Nucleophile is C389.

This sequence belongs to the class I-like SAM-binding methyltransferase superfamily. RNA M5U methyltransferase family. RlmD subfamily.

It catalyses the reaction uridine(1939) in 23S rRNA + S-adenosyl-L-methionine = 5-methyluridine(1939) in 23S rRNA + S-adenosyl-L-homocysteine + H(+). Catalyzes the formation of 5-methyl-uridine at position 1939 (m5U1939) in 23S rRNA. This chain is 23S rRNA (uracil(1939)-C(5))-methyltransferase RlmD, found in Aromatoleum aromaticum (strain DSM 19018 / LMG 30748 / EbN1) (Azoarcus sp. (strain EbN1)).